A 662-amino-acid polypeptide reads, in one-letter code: Putative cysteine-rich receptor-like protein kinase 16 (662 aa).

The first 26 residues, 1-26 (MIFIMKLKNLLPIFCFFLVSFSISSA), serve as a signal peptide directing secretion. 2 Gnk2-homologous domains span residues 27 to 131 (QKCG…NRSF) and 137 to 244 (MTPF…LYQF). Topologically, residues 27–277 (QKCGKTGLFK…DDGGKISTRN (251 aa)) are extracellular. N-linked (GlcNAc...) asparagine glycosylation is found at Asn-55, Asn-64, Asn-106, Asn-128, Asn-145, Asn-152, and Asn-206. The chain crosses the membrane as a helical span at residues 278 to 298 (ILGITVALAFFITVLLVLGYA). Topologically, residues 299 to 662 (LSRRRKAYQE…DASITSVDLR (364 aa)) are cytoplasmic. Positions 335–612 (FQKSNKLGHG…VFQMLTNTFL (278 aa)) constitute a Protein kinase domain. Residues 341–349 (LGHGGFGEV) and Lys-363 contribute to the ATP site. Asp-460 acts as the Proton acceptor in catalysis.

This sequence belongs to the protein kinase superfamily. Ser/Thr protein kinase family. CRK subfamily.

Its subcellular location is the membrane. The enzyme catalyses L-seryl-[protein] + ATP = O-phospho-L-seryl-[protein] + ADP + H(+). It catalyses the reaction L-threonyl-[protein] + ATP = O-phospho-L-threonyl-[protein] + ADP + H(+). The sequence is that of Putative cysteine-rich receptor-like protein kinase 16 (CRK16) from Arabidopsis thaliana (Mouse-ear cress).